Here is a 237-residue protein sequence, read N- to C-terminus: 2-C-methyl-D-erythritol 4-phosphate cytidylyltransferase (237 aa).

The protein belongs to the IspD/TarI cytidylyltransferase family. IspD subfamily.

The catalysed reaction is 2-C-methyl-D-erythritol 4-phosphate + CTP + H(+) = 4-CDP-2-C-methyl-D-erythritol + diphosphate. The protein operates within isoprenoid biosynthesis; isopentenyl diphosphate biosynthesis via DXP pathway; isopentenyl diphosphate from 1-deoxy-D-xylulose 5-phosphate: step 2/6. Catalyzes the formation of 4-diphosphocytidyl-2-C-methyl-D-erythritol from CTP and 2-C-methyl-D-erythritol 4-phosphate (MEP). The protein is 2-C-methyl-D-erythritol 4-phosphate cytidylyltransferase of Acidithiobacillus ferrooxidans (strain ATCC 23270 / DSM 14882 / CIP 104768 / NCIMB 8455) (Ferrobacillus ferrooxidans (strain ATCC 23270)).